The sequence spans 558 residues: MDIFRILSRGASLKKSKDVTTDYALPSAKQQQYEQHKEDTLQHQVDKEIDFFHTKKHNSSKSFDSTDSKHTKEEKKEKKEDEEAPPLEIQTVEDSIKLRKANHSKVTGEDIPLPIGSFQDMIGRFRLDSKLLSNLLEAEFVEPTAIQCESLPISLSGRDLIACAPTGSGKTLAFLIPLIQSLLVSSKGRPKNYGITGLVISPTNELAIQIFQELQILTRGKKLNVAILSKQLANKLNNDIVKASKYDIIVSTPLRLIDIVKNEKVDLSKVEQLVIDEADKLFDQGFVEQTDDILSHCTYTKIRKSMFSATIPSGVEEMAHSIMRDPIRVIIGRKEAASNTIDQKLVFTGSEEGKLLAIRQMIQEGEFKPPIIIFLQSIHRAKALFHELLYDKLNVDVIHAERTPKQREEVIKRFKNGDIWVLITTDVLARGVDFKGVNMVINYDVPQTAQAYVHRIGRTGRGGKAGRAVTFFTKEDDQAVKPIINVMKQSGCEAGFSGWMENMTKMSKNEKKKVKHKEIDRKDISTVPKLVKHKRKQREQMIEASKKRKQEETRNALQ.

Positions proline 26–threonine 91 are disordered. Composition is skewed to basic and acidic residues over residues glutamate 34–histidine 53 and aspartate 64–aspartate 81. Residues aspartate 120 to cysteine 148 carry the Q motif motif. One can recognise a Helicase ATP-binding domain in the interval leucine 151–valine 329. Alanine 164–threonine 171 contacts ATP. Positions aspartate 276–aspartate 279 match the DEAD box motif. Residues threonine 340–threonine 504 form the Helicase C-terminal domain. The segment at asparagine 509–glutamine 558 is disordered. The segment covering arginine 538–glutamine 558 has biased composition (basic and acidic residues).

This sequence belongs to the DEAD box helicase family. DDX52/ROK1 subfamily. In terms of assembly, interacts with the U3 snoRNA and is associated with the 90S and 40S pre-ribosomes.

The protein localises to the nucleus. Its subcellular location is the nucleolus. The enzyme catalyses ATP + H2O = ADP + phosphate + H(+). Functionally, ATP-dependent RNA helicase involved in 40S ribosomal subunit biogenesis. Required for the processing and cleavage of 35S pre-rRNA at sites A0, A1, and A2, leading to mature 18S rRNA. The protein is ATP-dependent RNA helicase ROK1 (ROK1) of Scheffersomyces stipitis (strain ATCC 58785 / CBS 6054 / NBRC 10063 / NRRL Y-11545) (Yeast).